The sequence spans 199 residues: Early activation antigen CD69 (199 aa).

Residues 1–29 (MSSENCFVAENSSLHPESGQENDATSPHF) are disordered. Topologically, residues 1–40 (MSSENCFVAENSSLHPESGQENDATSPHFSTRHEGSFQVP) are cytoplasmic. A helical; Signal-anchor for type II membrane protein transmembrane segment spans residues 41–61 (VLCAVMNVVFITILIIALIAL). Over 62–199 (SVGQYNCPGQ…LYWICNKPYK (138 aa)) the chain is Extracellular. 3 disulfide bridges follow: C85/C96, C113/C194, and C173/C186. Positions 92–195 (YQRKCYFIST…CEKNLYWICN (104 aa)) constitute a C-type lectin domain. An N-linked (GlcNAc...) asparagine glycan is attached at N166.

Homodimer; disulfide-linked. Interacts with S100A8 and S100A9. Interacts with galactin-1/LGALS1. Interacts with S1PR1; this interaction mediates S1PR1 degradation. In terms of processing, constitutive Ser/Thr phosphorylation in both mature thymocytes and activated T-lymphocytes. Expressed on the surface of activated T-cells, B-cells, natural killer cells, neutrophils, eosinophils, epidermal Langerhans cells and platelets.

Its subcellular location is the cell membrane. Transmembrane protein expressed mainly on T-cells resident in mucosa that plays an essential role in immune cell homeostasis. Rapidly expressed on the surface of platelets, T-lymphocytes and NK cells upon activation by various stimuli, such as antigen recognition or cytokine signaling, stimulates different signaling pathways in different cell types. Negatively regulates Th17 cell differentiation through its carbohydrate dependent interaction with galectin-1/LGALS1 present on immature dendritic cells. Association of CD69 cytoplasmic tail with the JAK3/STAT5 signaling pathway regulates the transcription of RORgamma/RORC and, consequently, differentiation toward the Th17 lineage. Also acts via the S100A8/S100A9 complex present on peripheral blood mononuclear cells to promote the conversion of naive CD4 T-cells into regulatory T-cells. Acts as an oxidized low-density lipoprotein (oxLDL) receptor in CD4 T-lymphocytes and negatively regulates the inflammatory response by inducing the expression of PDCD1 through the activation of NFAT. Participates in adipose tissue-derived mesenchymal stem cells (ASCs)-mediated protection against P.aeruginosa infection. Mechanistically, specifically recognizes P.aeruginosa to promote ERK1 activation, followed by granulocyte-macrophage colony-stimulating factor (GM-CSF) and other inflammatory cytokines secretion. In eosinophils, induces IL-10 production through the ERK1/2 pathway. Negatively regulates the chemotactic responses of effector lymphocytes and dendritic cells (DCs) to sphingosine 1 phosphate/S1P by acting as a S1PR1 receptor agonist and facilitating the internalization and degradation of the receptor. In Homo sapiens (Human), this protein is Early activation antigen CD69 (CD69).